A 285-amino-acid polypeptide reads, in one-letter code: Elongation factor Ts (285 aa).

The involved in Mg(2+) ion dislocation from EF-Tu stretch occupies residues 84–87 (TDFV).

It belongs to the EF-Ts family.

The protein resides in the cytoplasm. Functionally, associates with the EF-Tu.GDP complex and induces the exchange of GDP to GTP. It remains bound to the aminoacyl-tRNA.EF-Tu.GTP complex up to the GTP hydrolysis stage on the ribosome. The chain is Elongation factor Ts from Bifidobacterium animalis subsp. lactis (strain AD011).